We begin with the raw amino-acid sequence, 174 residues long: Protein CURVATURE THYLAKOID 1B, chloroplastic (174 aa).

Residues 1 to 20 (MASLSVSSSSTIIDSRAPPS) are disordered. The N-terminal 63 residues, 1 to 63 (MASLSVSSSS…RKIVRNVVTR (63 aa)), are a transit peptide targeting the chloroplast. Ala64 carries the N-acetylalanine modification. Residues 64 to 100 (ATTEVGEAPATTTEAETTELPEIVKTAQEAWEKVDDK) lie on the Stromal side of the membrane. The helical transmembrane segment at 101 to 121 (YAIGSLAFAGVVALWGSAGMI) threads the bilayer. At 122–126 (SAIDR) the chain is on the lumenal side. The chain crosses the membrane as a helical span at residues 127-147 (LPLVPGVLELVGIGYTGWFTY). The Stromal segment spans residues 148–174 (KNLVFKPDREALFEKVKSTYKDILGSS).

Belongs to the CURT family. In terms of assembly, homo- and heterodimers and trimers. Interacts with PSAL. Post-translationally, phosphorylated on either Thr-65 or Thr-66 by a threonine specific thylakoid kinase.

Its subcellular location is the plastid. It localises to the chloroplast thylakoid membrane. In terms of biological role, determines thylakoid architecture by inducing membrane curvature. This is Protein CURVATURE THYLAKOID 1B, chloroplastic (CURT1B) from Arabidopsis thaliana (Mouse-ear cress).